Consider the following 117-residue polypeptide: DNA-directed RNA polymerase subunit omega (117 aa).

It belongs to the RNA polymerase subunit omega family. As to quaternary structure, the RNAP catalytic core consists of 2 alpha, 1 beta, 1 beta' and 1 omega subunit. When a sigma factor is associated with the core the holoenzyme is formed, which can initiate transcription.

The catalysed reaction is RNA(n) + a ribonucleoside 5'-triphosphate = RNA(n+1) + diphosphate. Promotes RNA polymerase assembly. Latches the N- and C-terminal regions of the beta' subunit thereby facilitating its interaction with the beta and alpha subunits. This Cereibacter sphaeroides (strain ATCC 17029 / ATH 2.4.9) (Rhodobacter sphaeroides) protein is DNA-directed RNA polymerase subunit omega.